The chain runs to 116 residues: Flagellar transcriptional regulator FlhD (116 aa).

Belongs to the FlhD family. As to quaternary structure, homodimer; disulfide-linked. Forms a heterohexamer composed of two FlhC and four FlhD subunits. Each FlhC binds a FlhD dimer, forming a heterotrimer, and a hexamer assembles by dimerization of two heterotrimers.

It is found in the cytoplasm. Its function is as follows. Functions in complex with FlhC as a master transcriptional regulator that regulates transcription of several flagellar and non-flagellar operons by binding to their promoter region. Activates expression of class 2 flagellar genes, including fliA, which is a flagellum-specific sigma factor that turns on the class 3 genes. Also regulates genes whose products function in a variety of physiological pathways. The sequence is that of Flagellar transcriptional regulator FlhD from Escherichia coli O157:H7.